Consider the following 295-residue polypeptide: MNKKLEALFRENVKGKVALITGASSGIGLTIAKRIAAAGAHVLLVARTQETLEEVKAAIEQQGGQASIFPCDLTDMNAIDQLSQQIMASVDHVDFLINNAGRSIRRAVHESFDRFHDFERTMQLNYFGAVRLVLNLLPHMIKRKNGQIINISSIGVLANATRFSAYVASKAALDAFSRCLSAEVLKHKISITSIYMPLVRTPMIAPTKIYKYVPTLSPEEAADLIVYAIVKRPKRIATHLGRLASITYAIAPDINNILMSIGFNLFPSSTAALGEQEKLNLLQRAYARLFPGEHW.

21–28 (TGASSGIG) lines the NADP(+) pocket. Residue Ser153 participates in substrate binding. Tyr166 acts as the Proton acceptor in catalysis.

Belongs to the short-chain dehydrogenases/reductases (SDR) family.

The enzyme catalyses hexadecanal + NADP(+) + CoA = hexadecanoyl-CoA + NADPH + H(+). In terms of biological role, catalyzes the NADPH-dependent reduction of long chain acyl-CoA (with chain lengths of 14 to 22 carbons) to the corresponding aldehyde. In Acinetobacter baylyi (strain ATCC 33305 / BD413 / ADP1), this protein is Fatty acyl-CoA reductase (acr1).